The sequence spans 183 residues: MRKIVVAAIAVSLTTVGITASASADPSKDSKAQAAVAEAGITGTWYNQLGSTFIVTANADGSLTGTYESAVGNAESRYVLTGRYDSAPATDGSGTALGWTVAWKNNYRNAHSATTWSGQYVAGSEARINTQWLLTSGTTAANAWKSTLVGHDTFTKVKPSAASIDAAKKAGVNNGNPLDAVQQ.

A signal peptide spans 1–24 (MRKIVVAAIAVSLTTVGITASASA). The region spanning 37–159 (AEAGITGTWY…GHDTFTKVKP (123 aa)) is the Avidin-like domain. Tyrosine 67 and tyrosine 78 together coordinate biotin. A Cell attachment site; atypical motif is present at residues 83–85 (RYD). Biotin-binding residues include tryptophan 116, tryptophan 132, and tryptophan 144.

This sequence belongs to the avidin/streptavidin family. As to quaternary structure, homotetramer.

Its subcellular location is the secreted. In terms of biological role, the biological function of streptavidin is not known. Forms a strong non-covalent specific complex with biotin (one molecule of biotin per subunit of streptavidin). This chain is Streptavidin-V2, found in Streptomyces violaceus (Streptomyces venezuelae).